We begin with the raw amino-acid sequence, 474 residues long: Tubulin gamma-2 chain (474 aa).

GTP is bound at residue 142-148; that stretch reads AGGTGSG.

Belongs to the tubulin family. Gamma-tubulin complex is composed of gamma-tubulin and GCP proteins.

The protein resides in the cytoplasm. It is found in the cytoskeleton. Its subcellular location is the microtubule organizing center. It localises to the nucleus. The protein localises to the cell cortex. Tubulin is the major constituent of microtubules. The gamma chain is found at microtubule organizing centers (MTOC) such as the spindle poles, suggesting that it is involved in the minus-end nucleation of microtubule assembly. In terms of biological role, gamma-tubulin complex is essential for the control of microtubular network remodeling in the course of initiation and development of giant-feeding cells, and for the successful reproduction of nematodes (e.g. Meloidogyne spp.) in their plant hosts. The protein is Tubulin gamma-2 chain (TUBG2) of Arabidopsis thaliana (Mouse-ear cress).